Here is a 910-residue protein sequence, read N- to C-terminus: UPF0182 protein Acid_6445 (910 aa).

Transmembrane regions (helical) follow at residues 17–37 (ITLLAILLFLLFGLRSFAGYA), 56–76 (LYYGIAPVAVATLVAFLALWI), 101–121 (LALLFLAWFIAAGAIDTWTVV), 157–177 (LLRSYVLAVIIFCVLLYWIAA), 210–229 (FLRGAAVIGLIALAVRFYLG), 252–272 (IGLPLQWLVIFACLAAAAFVA), and 276–296 (WFLAALMALALVVDFAAPRIV).

Belongs to the UPF0182 family.

The protein resides in the cell membrane. This is UPF0182 protein Acid_6445 from Solibacter usitatus (strain Ellin6076).